The primary structure comprises 337 residues: Anthranilate phosphoribosyltransferase (337 aa).

Residues Gly-80, 83-84 (GD), Thr-88, 90-93 (NIST), 108-116 (KHGNRAVSS), and Ser-120 contribute to the 5-phospho-alpha-D-ribose 1-diphosphate site. Gly-80 is an anthranilate binding site. Residue Ser-92 coordinates Mg(2+). Asn-111 is a binding site for anthranilate. Arg-166 contacts anthranilate. Residues Asp-224 and Glu-225 each coordinate Mg(2+).

The protein belongs to the anthranilate phosphoribosyltransferase family. As to quaternary structure, homodimer. Mg(2+) serves as cofactor.

It catalyses the reaction N-(5-phospho-beta-D-ribosyl)anthranilate + diphosphate = 5-phospho-alpha-D-ribose 1-diphosphate + anthranilate. The protein operates within amino-acid biosynthesis; L-tryptophan biosynthesis; L-tryptophan from chorismate: step 2/5. Its function is as follows. Catalyzes the transfer of the phosphoribosyl group of 5-phosphorylribose-1-pyrophosphate (PRPP) to anthranilate to yield N-(5'-phosphoribosyl)-anthranilate (PRA). This is Anthranilate phosphoribosyltransferase from Anaeromyxobacter dehalogenans (strain 2CP-C).